We begin with the raw amino-acid sequence, 465 residues long: Serine/threonine-protein kinase 38 (465 aa).

Position 2 is an N-acetylalanine (Ala-2). The interaction with S100B stretch occupies residues 62 to 87 (KRLRRSAHARKETEFLRLKRTRLGLE). Thr-74 carries the post-translational modification Phosphothreonine. Residues 89 to 382 (FESLKVIGRG…VEEIKNNSFF (294 aa)) enclose the Protein kinase domain. Residues 95 to 103 (IGRGAFGEV) and Lys-118 each bind ATP. The active-site Proton acceptor is the Asp-212. A Phosphoserine modification is found at Ser-264. A Phosphoserine; by autocatalysis modification is found at Ser-281. Residues 306 to 311 (WSLGVI) carry the UFM1-interacting motif (UFIM) motif. The 73-residue stretch at 383–455 (EGVDWEHIRE…KRFEGLTARG (73 aa)) folds into the AGC-kinase C-terminal domain. At Thr-444 the chain carries Phosphothreonine; by STK24/MST3.

The protein belongs to the protein kinase superfamily. AGC Ser/Thr protein kinase family. In terms of assembly, homodimeric S100B binds two molecules of STK38. Interacts with MOB1 and MOB2. Interacts with MAP3K1 and MAP3K2 (via the kinase domain). Forms a tripartite complex with MOBKL1B and STK3/MST2. Interacts with MICAL1; leading to inhibit the protein kinase activity by antagonizing activation by MST1/STK4. It depends on Mg(2+) as a cofactor. In terms of processing, ISGylated. Post-translationally, phosphorylated by STK3/MST2 and this is enhanced by MOBKL1B.

Its subcellular location is the nucleus. The protein resides in the cytoplasm. It localises to the chromosome. It catalyses the reaction L-seryl-[protein] + ATP = O-phospho-L-seryl-[protein] + ADP + H(+). The catalysed reaction is L-threonyl-[protein] + ATP = O-phospho-L-threonyl-[protein] + ADP + H(+). With respect to regulation, activated by binding of S100B which releases autoinhibitory N-lobe interactions, enabling ATP to bind and the autophosphorylation of Ser-281. Thr-444 then undergoes calcium-dependent phosphorylation by STK24/MST3. Interactions between phosphorylated Thr-444 and the N-lobe promote additional structural changes that complete the activation of the kinase. Autoinhibition is also released by the binding of MOB1/MOBKL1A and MOB2/HCCA2 to the N-terminal of STK38. Functionally, serine/threonine-protein kinase that acts as a negative regulator of MAP3K1/2 signaling. Converts MAP3K2 from its phosphorylated form to its non-phosphorylated form and inhibits autophosphorylation of MAP3K2. Acts as an ufmylation 'reader' in a kinase-independent manner: specifically recognizes and binds mono-ufmylated histone H4 in response to DNA damage, promoting the recruitment of SUV39H1 to the double-strand breaks, resulting in ATM activation. In Bos taurus (Bovine), this protein is Serine/threonine-protein kinase 38 (STK38).